A 1192-amino-acid polypeptide reads, in one-letter code: MEDLDQSPLVSSSDSPPRPQPAFKYQFVREPEDEEEEEEEEEEDEDEDLEELEVLERKPAAGLSAAPVPTAPAAGAPLMDFGNDFVPPAPRGPLPAAPPVAPERQPSWDPSPVSSTVPAPSPLSAAAVSPSKLPEDDEPPARPPPPPPASVSPQAEPVWTPPAPAPAAPPSTPAAPKRRGSSGSVDETLFALPAASEPVIRSSAENMDLKEQPGNTISAGQEDFPSVLLETAASLPSLSPLSAASFKEHEYLGNLSTVLPTEGTLQENVSEASKEVSEKAKTLLIDRDLTEFSELEYSEMGSSFSVSPKAESAVIVANPREEIIVKNKDEEEKLVSNNILHNQQELPTALTKLVKEDEVVSSEKAKDSFNEKRVAVEAPMREEYADFKPFERVWEVKDSKEDSDMLAAGGKIESNLESKVDKKCFADSLEQTNHEKDSESSNDDTSFPSTPEGIKDRSGAYITCAPFNPAATESIATNIFPLLGDPTSENKTDEKKIEEKKAQIVTEKNTSTKTSNPFLVAAQDSETDYVTTDNLTKVTEEVVANMPEGLTPDLVQEACESELNEVTGTKIAYETKMDLVQTSEVMQESLYPAAQLCPSFEESEATPSPVLPDIVMEAPLNSAVPSAGASVIQPSSSPLEASSVNYESIKHEPENPPPYEEAMSVSLKKVSGIKEEIKEPENINAALQETEAPYISIACDLIKETKLSAEPAPDFSDYSEMAKVEQPVPDHSELVEDSSPDSEPVDLFSDDSIPDVPQKQDETVMLVKESLTETSFESMIEYENKEKLSALPPEGGKPYLESFKLSLDNTKDTLLPDEVSTLSKKEKIPLQMEELSTAVYSNDDLFISKEAQIRETETFSDSSPIEIIDEFPTLISSKTDSFSKLAREYTDLEVSHKSEIANAPDGAGSLPCTELPHDLSLKNIQPKVEEKISFSDDFSKNGSATSKVLLLPPDVSALATQAEIESIVKPKVLVKEAEKKLPSDTEKEDRSPSAIFSAELSKTSVVDLLYWRDIKKTGVVFGASLFLLLSLTVFSIVSVTAYIALALLSVTISFRIYKGVIQAIQKSDEGHPFRAYLESEVAISEELVQKYSNSALGHVNCTIKELRRLFLVDDLVDSLKFAVLMWVFTYVGALFNGLTLLILALISLFSVPVIYERHQAQIDHYLGLANKNVKDAMAKIQAKIPGLKRKAE.

Met1 bears the N-acetylmethionine mark. The tract at residues 1–204 (MEDLDQSPLV…ASEPVIRSSA (204 aa)) is disordered. Residues 1–1018 (MEDLDQSPLV…LYWRDIKKTG (1018 aa)) are Cytoplasmic-facing. Ser7 and Ser15 each carry phosphoserine. The segment covering 31 to 53 (PEDEEEEEEEEEEDEDEDLEELE) has biased composition (acidic residues). Low complexity predominate over residues 65-77 (AAPVPTAPAAGAP). The span at 87–101 (PPAPRGPLPAAPPVA) shows a compositional bias: pro residues. Ser107 is modified (phosphoserine). Residues 110-132 (PSPVSSTVPAPSPLSAAAVSPSK) show a composition bias toward low complexity. Residues 141–150 (ARPPPPPPAS) are compositionally biased toward pro residues. Position 152 is a phosphoserine (Ser152). The segment covering 159–173 (WTPPAPAPAAPPSTP) has biased composition (pro residues). Phosphoserine is present on residues Ser181, Ser182, Ser184, Ser361, and Ser446. Positions 427-458 (DSLEQTNHEKDSESSNDDTSFPSTPEGIKDRS) are disordered. The residue at position 450 (Thr450) is a Phosphothreonine. A Phosphoserine modification is found at Ser511. A compositionally biased stretch (basic and acidic residues) spans 722-734 (AKVEQPVPDHSEL). The disordered stretch occupies residues 722 to 762 (AKVEQPVPDHSELVEDSSPDSEPVDLFSDDSIPDVPQKQDE). Positions 735–753 (VEDSSPDSEPVDLFSDDSI) are enriched in acidic residues. A Phosphoserine modification is found at Ser749. Thr858 carries the post-translational modification Phosphothreonine. Ser881 and Ser991 each carry phosphoserine. In terms of domain architecture, Reticulon spans 1005–1192 (VVDLLYWRDI…KIPGLKRKAE (188 aa)). A helical membrane pass occupies residues 1019 to 1039 (VVFGASLFLLLSLTVFSIVSV). Residues 1040–1133 (TAYIALALLS…LMWVFTYVGA (94 aa)) lie on the Lumenal side of the membrane. Lys1104 carries the post-translational modification N6-acetyllysine. The chain crosses the membrane as a helical span at residues 1134–1154 (LFNGLTLLILALISLFSVPVI). Residues 1155 to 1192 (YERHQAQIDHYLGLANKNVKDAMAKIQAKIPGLKRKAE) are Cytoplasmic-facing.

In terms of assembly, binds to RTN4R. Interacts with ATL1. Interacts with TMEM170A. Interacts with RTN4IP1. As to quaternary structure, interacts in trans with CNTNAP1. Interacts with REEP5. Interacts with synaptic plasticity regulator PANTS; the interaction results in enhanced RTN4-mediated inhibition of AMPA receptor clustering. Interacts with GPR50. Homodimer. Interacts with BAD/Bcl-xl and BCL2. Interact with RTN3. Interacts with NGBR. Interacts with SPTLC1. Interacts with GRAMD4. Interacts with CDH5. Interacts with BACE1 and BACE2. Interacts with REEP5. Interacts with RETREG3. In terms of assembly, interacts with BACE1 and BACE2. Interacts with TMEM33. As to expression, isoform A: is specifically expressed in brain and testis and weakly in heart and skeletal muscle. Isoform B: widely expressed except for the liver. Highly expressed in endothelial cells and vascular smooth muscle cells, including blood vessels and mesenteric arteries. Isoform C: is expressed in brain, skeletal muscle and adipocytes. Isoform D is testis-specific.

Its subcellular location is the endoplasmic reticulum membrane. The protein localises to the cell membrane. It is found in the synapse. It localises to the cell junction. Its function is as follows. Required to induce the formation and stabilization of endoplasmic reticulum (ER) tubules. They regulate membrane morphogenesis in the ER by promoting tubular ER production. They influence nuclear envelope expansion, nuclear pore complex formation and proper localization of inner nuclear membrane proteins. However each isoform have specific functions mainly depending on their tissue expression specificities. Developmental neurite growth regulatory factor with a role as a negative regulator of axon-axon adhesion and growth, and as a facilitator of neurite branching. Regulates neurite fasciculation, branching and extension in the developing nervous system. Involved in down-regulation of growth, stabilization of wiring and restriction of plasticity in the adult CNS. Regulates the radial migration of cortical neurons via an RTN4R-LINGO1 containing receptor complex. Acts as a negative regulator of central nervous system angiogenesis. Inhibits spreading, migration and sprouting of primary brain microvascular endothelial cells (MVECs). Also induces the retraction of MVECs lamellipodia and filopodia in a ROCK pathway-dependent manner. In terms of biological role, mainly function in endothelial cells and vascular smooth muscle cells, is also involved in immune system regulation. Modulator of vascular remodeling, promotes the migration of endothelial cells but inhibits the migration of vascular smooth muscle cells. Regulates endothelial sphingolipid biosynthesis with direct effects on vascular function and blood pressure. Inhibits serine palmitoyltransferase, SPTLC1, the rate-limiting enzyme of the novo sphingolipid biosynthetic pathway, thereby controlling production of endothelial sphingosine-1-phosphate (S1P). Required to promote macrophage homing and functions such as cytokine/chemokine gene expression involved in angiogenesis, arteriogenesis and tissue repair. Mediates ICAM1 induced transendothelial migration of leukocytes such as monocytes and neutrophils and acute inflammation. Necessary for immune responses triggered by nucleic acid sensing TLRs, such as TLR9, is required for proper TLR9 location to endolysosomes. Also involved in immune response to LPS. Plays a role in liver regeneration through the modulation of hepatocytes proliferation. Reduces the anti-apoptotic activity of Bcl-xl and Bcl-2. This is likely consecutive to their change in subcellular location, from the mitochondria to the endoplasmic reticulum, after binding and sequestration. With isoform C, inhibits BACE1 activity and amyloid precursor protein processing. Functionally, regulates cardiomyocyte apoptosis upon hypoxic conditions. With isoform B, inhibits BACE1 activity and amyloid precursor protein processing. In Homo sapiens (Human), this protein is Reticulon-4.